A 459-amino-acid polypeptide reads, in one-letter code: Flavin-containing monooxygenase FMO GS-OX5 (459 aa).

FAD is bound at residue 17–22 (GAGAAG). 212–217 (GNFASG) is an NADP(+) binding site.

It belongs to the FMO family.

It carries out the reaction a (Z)-omega-(methylsulfanyl)-N-sulfo-alkylhydroximate S-glucoside + NADPH + O2 + H(+) = a (Z)-omega-(methylsulfinyl)-alkyl-glucosinolate + NADP(+) + H2O. Functionally, catalyzes the conversion of methylthioalkyl glucosinolates into methylsulfinylalkyl glucosinolates. Specific for 8-methylthiooctyl (8-MTO) glucosinolates. In Arabidopsis thaliana (Mouse-ear cress), this protein is Flavin-containing monooxygenase FMO GS-OX5 (FMOGS-OX5).